The sequence spans 428 residues: MKLITNKQGLVGAITVPGDKSMSHRSIMFGAIAEGKTVIRHFLRADDCLGTIKAFKALGVKIEETEEEIIVHGTGFDGLKQADGPLDIGNSGTTIRLMMGILAGRDFDTVILGDESIAKRPMNRVMLPLQQMGAKMHGKDGSEFAPITINGKQSLKRMEYHMPVASAQVKSAIIFAALQAEGETIIHEKEKTRDHTEHMIRQFGGEIEMDGLTIRVKGGQTFTGQEMTVPGDVSSAAFFIVAGLITPGSEIELTHVGLNPTRTGIFDVVEQMGGSLVVKDSSRSTGKLAGTVVVKTSDLKGTEIGGDIIPRLIDEIPVIALLATQAEGTTIIKDAAELKVKETNRIDAVATELNKMGADITPTEDGLIIRGKTPLHAANVTSYGDHRIGMMLQIAALLVEEGDVELERAEAVSVSYPTFFEDIRSLLK.

Positions 20, 21, and 25 each coordinate 3-phosphoshikimate. Lysine 20 serves as a coordination point for phosphoenolpyruvate. Residues glycine 92 and arginine 120 each contribute to the phosphoenolpyruvate site. 3-phosphoshikimate-binding residues include serine 166, glutamine 168, aspartate 314, and lysine 341. Glutamine 168 is a phosphoenolpyruvate binding site. Aspartate 314 serves as the catalytic Proton acceptor. Residues arginine 345 and arginine 387 each coordinate phosphoenolpyruvate.

This sequence belongs to the EPSP synthase family. Monomer.

It localises to the cytoplasm. It catalyses the reaction 3-phosphoshikimate + phosphoenolpyruvate = 5-O-(1-carboxyvinyl)-3-phosphoshikimate + phosphate. Its pathway is metabolic intermediate biosynthesis; chorismate biosynthesis; chorismate from D-erythrose 4-phosphate and phosphoenolpyruvate: step 6/7. Catalyzes the transfer of the enolpyruvyl moiety of phosphoenolpyruvate (PEP) to the 5-hydroxyl of shikimate-3-phosphate (S3P) to produce enolpyruvyl shikimate-3-phosphate and inorganic phosphate. The chain is 3-phosphoshikimate 1-carboxyvinyltransferase from Listeria monocytogenes serotype 4a (strain HCC23).